Reading from the N-terminus, the 514-residue chain is MYRKLAVISAFLATARAQSACTLQSETHPPLTWQKCSSGGTCTQQTGSVVIDANWRWTHATNSSTNCYDGNTWSSTLCPDNETCAKNCCLDGAAYASTYGVTTSGNSLSIGFVTQSAQKNVGARLYLMASDTTYQEFTLLGNEFSFDVDVSQLPCGLNGALYFVSMDADGGVSKYPTNTAGAKYGTGYCDSQCPRDLKFINGQANVEGWEPSSNNANTGIGGHGSCCSEMDIWEANSISEALTPHPCTTVGQEICEGDGCGGTYSDNRYGGTCDPDGCDWNPYRLGNTSFYGPGSSFTLDTTKKLTVVTQFETSGAINRYYVQNGVTFQQPNAELGSYSGNELNDDYCTAEEAEFGGSSFSDKGGLTQFKKATSGGMVLVMSLWDDYYANMLWLDSTYPTNETSSTPGAVRGSCSTSSGVPAQVESQSPNAKVTFSNIKFGPIGSTGNPSGGNPPGGNPPGTTTTRRPATTTGSSPGPTQSHYGQCGGIGYSGPTVCASGTTCQVLNPYYSQCL.

The N-terminal stretch at 1 to 17 (MYRKLAVISAFLATARA) is a signal peptide. A Pyrrolidone carboxylic acid modification is found at Gln-18. The segment at 18–453 (QSACTLQSET…GSTGNPSGGN (436 aa)) is catalytic. Disulfide bonds link Cys-21-Cys-89, Cys-36-Cys-42, Cys-67-Cys-88, Cys-78-Cys-84, Cys-155-Cys-414, Cys-189-Cys-227, Cys-193-Cys-226, Cys-247-Cys-273, Cys-255-Cys-260, and Cys-278-Cys-348. Residue Asn-62 is glycosylated (N-linked (GlcNAc) asparagine). Glu-229 functions as the Nucleophile in the catalytic mechanism. The active-site Proton donor/acceptor is the Glu-234. N-linked (GlcNAc...) (high mannose) asparagine glycosylation occurs at Asn-287. Asn-401 is a glycosylation site (N-linked (GlcNAc) asparagine). Over residues 401–437 (NETSSTPGAVRGSCSTSSGVPAQVESQSPNAKVTFSN) the composition is skewed to polar residues. The segment at 401–481 (NETSSTPGAV…TGSSPGPTQS (81 aa)) is disordered. Residues 454-478 (PPGGNPPGTTTTRRPATTTGSSPGP) are linker. The segment covering 460–479 (PGTTTTRRPATTTGSSPGPT) has biased composition (low complexity). Residue Thr-462 is glycosylated (O-linked (Man) threonine). O-linked (Man...) threonine glycans are attached at residues Thr-463, Thr-464, and Thr-465. Thr-470 carries O-linked (Man) threonine glycosylation. O-linked (Man...) threonine glycans are attached at residues Thr-471 and Thr-472. Residues Ser-474 and Ser-475 are each glycosylated (O-linked (Man) serine). The CBM1 domain occupies 478–514 (PTQSHYGQCGGIGYSGPTVCASGTTCQVLNPYYSQCL). A glycan (O-linked (Man) threonine) is linked at Thr-479. Residues Ser-481 and Ser-492 are each glycosylated (O-linked (Man) serine). Disulfide bonds link Cys-486–Cys-503 and Cys-497–Cys-513.

The protein belongs to the glycosyl hydrolase 7 (cellulase C) family. In terms of processing, N-glycosylated. A high mannose glycan is attached to Asn-287 (predominantly Man(8)GlcNAc(2)) and single GlcNAc occupancy is observed at Asn-62 and Asn-401 with some site heterogeneity depending on strains and fermentation conditions. O-glycosylated. Within the linker domain, all 8 threonines are variably glycosylated with between at least one, and up to three, mannose residues per site. All serines in this domain are at least partially glycosylated with a single mannose residue. O-glycosylation of the cellulase linker provides protection from proteolysis. Linker glycans also contribute to binding affinity of cellobiohydrolases to cellulose.

Its subcellular location is the secreted. It catalyses the reaction Hydrolysis of (1-&gt;4)-beta-D-glucosidic linkages in cellulose and cellotetraose, releasing cellobiose from the non-reducing ends of the chains.. Functionally, exocellobiohydrolases (CBH) that catalyzes the hydrolysis of 1,4-beta-D-glucosidic bonds in cellulose to release the disaccharide cellobiose. The degradation of cellulose involves an interplay between different cellulolytic enzymes. Hydrolysis starts with endoglucanases (EGs), which cut internal beta-1,4-glucosidic bonds in cellulose to reduce the polymerization degree of the substrate and create new chain ends for exocellobiohydrolases (CBHs). The CBHs release the disaccharide cellobiose from the non-reducing end of the cellulose polymer chain. Finally, beta-1,4-glucosidases hydrolyze the cellobiose and other short cello-oligosaccharides into glucose units. The sequence is that of Exoglucanase 1 (cbh1) from Hypocrea jecorina (strain ATCC 56765 / BCRC 32924 / NRRL 11460 / Rut C-30) (Trichoderma reesei).